Here is a 3567-residue protein sequence, read N- to C-terminus: Sushi, von Willebrand factor type A, EGF and pentraxin domain-containing protein 1 (3567 aa).

The first 17 residues, 1-17, serve as a signal peptide directing secretion; it reads MWSRLAFCCWALALVSG. In terms of domain architecture, VWFA spans 84–265; sequence ELVFLVDESS…LARRALHEDL (182 aa). N-linked (GlcNAc...) asparagine glycosylation occurs at N187. 3 Sushi domains span residues 377–436, 437–496, and 497–561; these read VHCP…FCRV, RTCP…RCVE, and RHCA…VCKD. Disulfide bonds link C379/C421, C407/C434, C439/C481, C467/C494, C499/C544, and C530/C559. 2 consecutive HYR domains span residues 560–644 and 645–724; these read KDVE…KVID and VEPP…VIKG. The Sushi 4 domain maps to 725–789; sequence SPCEVPFTPV…YSTEWPDCAI (65 aa). Cystine bridges form between C727/C769, C753/C787, C1196/C1207, C1201/C1216, C1218/C1227, C1234/C1245, C1239/C1254, C1256/C1265, C1272/C1283, C1277/C1292, C1294/C1303, C1310/C1321, C1315/C1330, C1332/C1341, C1348/C1359, C1353/C1368, C1370/C1379, C1386/C1397, C1391/C1406, and C1408/C1417. One can recognise an EGF-like 1 domain in the interval 1192 to 1228; it reads VFHECFLNPCHNSGTCQQLGRGYVCLCPPGYTGLKCE. The EGF-like 2; calcium-binding domain maps to 1230 to 1266; the sequence is DIDECSSLPCLNGGICRDQVGGFTCECSLGYSGQICE. The region spanning 1268–1304 is the EGF-like 3; calcium-binding domain; sequence NINECISSPCLNKGTCTDGLASYRCTCVKGYMGVHCE. An EGF-like 4; calcium-binding domain is found at 1306 to 1342; the sequence is DVNECQSSPCLNNAVCKDQVGGFSCKCPPGFLGTRCE. Residues 1344 to 1380 enclose the EGF-like 5; calcium-binding domain; the sequence is NVDECLSQPCQNGATCKDGANSFRCQCPAGFTGTHCE. In terms of domain architecture, EGF-like 6; calcium-binding spans 1382–1418; the sequence is NINECQSNPCRNQATCVDELNSYSCKCQPGFSGHRCE. Residues 1423–1627 enclose the Pentraxin (PTX) domain; the sequence is SGFNLDFEVS…VKVDSSSMFC (205 aa). 2 Sushi domains span residues 1628-1686 and 1687-1744; these read SDCP…HCER and IRCG…SCLD. 35 disulfide bridges follow: C1630–C1671, C1657–C1684, C1689–C1729, C1715–C1742, C1748–C1760, C1754–C1769, C1771–C1782, C1788–C1828, C1814–C1841, C1846–C1886, C1872–C1899, C1904–C1944, C1930–C1957, C1962–C2002, C1988–C2015, C2020–C2060, C2046–C2077, C2082–C2125, C2111–C2140, C2145–C2185, C2171–C2198, C2203–C2244, C2230–C2258, C2263–C2303, C2289–C2317, C2322–C2362, C2348–C2375, C2380–C2421, C2407–C2434, C2439–C2479, C2465–C2492, C2497–C2537, C2523–C2550, C2555–C2595, and C2581–C2607. One can recognise an EGF-like 7; calcium-binding domain in the interval 1744 to 1783; the sequence is DVDECAVGSDCSEHASCLNTNGSYVCSCNPPYTGDGKNCA. Sushi domains follow at residues 1780–1843, 1844–1901, 1902–1959, 1960–2017, 2018–2079, 2080–2142, 2143–2200, 2201–2260, 2261–2319, 2320–2377, 2378–2436, 2437–2494, 2495–2552, and 2553–2609; these read KNCA…SCEA, ISCG…VCEL, VKCS…SCQL, VSCG…QCLA, VSCD…RCIA, HFCE…QCIP, VRCG…TCHP, VSCN…SCTP, LNCG…KCVP, TKCA…ICKM, VLCP…ECVP, VECP…MCKP, IECP…SCDA, and IHCS…TCVP. An important for the interaction with integrin ITGA9:ITGB1 region spans residues 2638-2645; sequence DMMEVPYL. Sushi domains are found at residues 2660–2711, 2712–2769, 2770–2827, 2828–2885, 2886–2943, 2944–3001, 3002–3057, 3058–3115, 3116–3174, 3175–3234, 3235–3292, 3293–3350, 3351–3409, and 3410–3466; these read NTKE…SCIS, IECD…RCEA, ISCS…MCIP, VDCG…SCMP, VRCP…VCKP, ATCG…SCLP, CRCS…LCEH, AQCG…TCEP, LSCG…TCSP, KKCP…SCIP, VVCG…VCRE, NRCE…LCKP, NPCP…RCEK, and ISCG…VCRA. 33 cysteine pairs are disulfide-bonded: C2682-C2709, C2714-C2754, C2740-C2767, C2772-C2812, C2798-C2825, C2830-C2870, C2856-C2883, C2888-C2928, C2914-C2941, C2946-C2986, C2972-C2999, C3004-C3043, C3029-C3055, C3060-C3100, C3086-C3113, C3118-C3159, C3144-C3172, C3177-C3217, C3203-C3232, C3237-C3277, C3263-C3290, C3295-C3335, C3321-C3348, C3353-C3394, C3380-C3407, C3412-C3452, C3438-C3464, C3500-C3510, C3504-C3516, C3518-C3527, C3532-C3542, C3536-C3548, and C3550-C3559. 2 EGF-like domains span residues 3496-3528 and 3529-3560; these read EEPI…SRCH and TATC…HDCS.

Interacts (via Sushi domain 21) with ITGA9:ITGB1; thereby inhibits Ca(2+) intracellular signaling and as a result represses vasocontraction. Interacts (via Sushi domain 21) with ITGA4:ITGB1; thereby inhibits Ca(2+) intracellular signaling and as a result represses vasocontraction. Interacts with ANGPT1 and ANGPT2. Interacts with PEAR1 (via extracellular domain). Interacts with HSPG2, TLN1, FN1, COPA, CCT2, IQGAP1, LAMC1 and NID1. Interacts (via C-terminus) with TIE1. Expressed in the media layer of the arterial wall (at protein level). Highly expressed in lung and placenta, weakly expressed in the kidney, heart, brain and spleen. Also expressed in bone and periosteum, but not in cartilage and skeletal muscle.

The protein localises to the secreted. The protein resides in the nucleus. It localises to the cytoplasm. Its subcellular location is the membrane. In terms of biological role, required for morphological development, cell alignment and migration of lymphatic endothelial cells during embryonic development, potentially via modulation of ANGPT2-TIE1 signaling and subsequent activation of FOXC2 transcription. Required for embryonic lymphatic vascular development, via mediating the correct formation of the first lymphovenous contact site and tight association of the lymphatic endothelium with the venous endothelium. Represses PRKCA-mediated L-type voltage-gated channel Ca(2+) influx and ROCK-mediated calcium sensitivity in vascular smooth muscle cells, via its interaction with integrins, thereby inhibiting vasocontraction. Promotes platelet activation, via its interaction with PEAR1 and subsequent activation of AKT/mTOR signaling. Plays a role in epidermal development and keratinocyte differentiation, independent of cell-cell adhesion. May play a role in initial cell attachment of stromal osteogenic cells. May promote myoblast cell adhesion when in the presence of integrin ITGA9:ITGB1. The sequence is that of Sushi, von Willebrand factor type A, EGF and pentraxin domain-containing protein 1 (Svep1) from Mus musculus (Mouse).